We begin with the raw amino-acid sequence, 47 residues long: PhoP/PhoQ regulator MgrB (47 aa).

A helical transmembrane segment spans residues 6-26; that stretch reads WVILIIVALVCLLLWAQVFNI.

The protein belongs to the MgrB family. May form homooligomers. Probably interacts with the periplasmic domain of PhoQ.

It is found in the cell inner membrane. In terms of biological role, phoP-regulated transcription is redox-sensitive, being activated when the periplasm becomes more reducing. MgrB acts between DsbA/DsbB and PhoP/PhoQ in this pathway. Represses PhoP/PhoQ signaling, possibly by binding to the periplasmic domain of PhoQ, altering its activity and that of downstream effector PhoP. This chain is PhoP/PhoQ regulator MgrB, found in Citrobacter koseri (strain ATCC BAA-895 / CDC 4225-83 / SGSC4696).